The primary structure comprises 87 residues: Putative regulatory protein CHY_1489 (87 aa).

This sequence belongs to the RemA family.

The polypeptide is Putative regulatory protein CHY_1489 (Carboxydothermus hydrogenoformans (strain ATCC BAA-161 / DSM 6008 / Z-2901)).